We begin with the raw amino-acid sequence, 762 residues long: Endonuclease MutS2 (762 aa).

333–340 (GVNAGGKT) provides a ligand contact to ATP. The Smr domain maps to 688–762 (LDLRGQRSEE…GGSGVKIVKL (75 aa)).

The protein belongs to the DNA mismatch repair MutS family. MutS2 subfamily. In terms of assembly, homodimer. Binds to stalled ribosomes, contacting rRNA.

Functionally, endonuclease that is involved in the suppression of homologous recombination and thus may have a key role in the control of bacterial genetic diversity. Its function is as follows. Acts as a ribosome collision sensor, splitting the ribosome into its 2 subunits. Detects stalled/collided 70S ribosomes which it binds and splits by an ATP-hydrolysis driven conformational change. Acts upstream of the ribosome quality control system (RQC), a ribosome-associated complex that mediates the extraction of incompletely synthesized nascent chains from stalled ribosomes and their subsequent degradation. Probably generates substrates for RQC. The chain is Endonuclease MutS2 from Helicobacter pylori (strain J99 / ATCC 700824) (Campylobacter pylori J99).